Consider the following 368-residue polypeptide: Anhydro-N-acetylmuramic acid kinase (368 aa).

Residue 13–20 (GTSLDGVD) coordinates ATP.

The protein belongs to the anhydro-N-acetylmuramic acid kinase family.

It catalyses the reaction 1,6-anhydro-N-acetyl-beta-muramate + ATP + H2O = N-acetyl-D-muramate 6-phosphate + ADP + H(+). Its pathway is amino-sugar metabolism; 1,6-anhydro-N-acetylmuramate degradation. It participates in cell wall biogenesis; peptidoglycan recycling. Its function is as follows. Catalyzes the specific phosphorylation of 1,6-anhydro-N-acetylmuramic acid (anhMurNAc) with the simultaneous cleavage of the 1,6-anhydro ring, generating MurNAc-6-P. Is required for the utilization of anhMurNAc either imported from the medium or derived from its own cell wall murein, and thus plays a role in cell wall recycling. The polypeptide is Anhydro-N-acetylmuramic acid kinase (Hahella chejuensis (strain KCTC 2396)).